The primary structure comprises 299 residues: Bifunctional protein FolD 1 (299 aa).

Residues Gly-168–Ser-170, Ser-193, and Ile-234 contribute to the NADP(+) site.

The protein belongs to the tetrahydrofolate dehydrogenase/cyclohydrolase family. As to quaternary structure, homodimer.

It carries out the reaction (6R)-5,10-methylene-5,6,7,8-tetrahydrofolate + NADP(+) = (6R)-5,10-methenyltetrahydrofolate + NADPH. The enzyme catalyses (6R)-5,10-methenyltetrahydrofolate + H2O = (6R)-10-formyltetrahydrofolate + H(+). It participates in one-carbon metabolism; tetrahydrofolate interconversion. Functionally, catalyzes the oxidation of 5,10-methylenetetrahydrofolate to 5,10-methenyltetrahydrofolate and then the hydrolysis of 5,10-methenyltetrahydrofolate to 10-formyltetrahydrofolate. The chain is Bifunctional protein FolD 1 from Rhizobium etli (strain ATCC 51251 / DSM 11541 / JCM 21823 / NBRC 15573 / CFN 42).